Reading from the N-terminus, the 333-residue chain is Adenosine deaminase (333 aa).

Zn(2+) contacts are provided by His-12 and His-14. Positions 14, 16, and 170 each coordinate substrate. His-197 contributes to the Zn(2+) binding site. Glu-200 acts as the Proton donor in catalysis. Residue Asp-278 coordinates Zn(2+). Asp-279 is a binding site for substrate.

It belongs to the metallo-dependent hydrolases superfamily. Adenosine and AMP deaminases family. Adenosine deaminase subfamily. It depends on Zn(2+) as a cofactor.

The catalysed reaction is adenosine + H2O + H(+) = inosine + NH4(+). It carries out the reaction 2'-deoxyadenosine + H2O + H(+) = 2'-deoxyinosine + NH4(+). In terms of biological role, catalyzes the hydrolytic deamination of adenosine and 2-deoxyadenosine. This is Adenosine deaminase from Escherichia coli (strain SMS-3-5 / SECEC).